The chain runs to 614 residues: DNA repair protein rad26 (614 aa).

The segment covering 29 to 43 (QAQTQVQAQSSQVVV) has biased composition (low complexity). 2 disordered regions span residues 29 to 76 (QAQT…QASL) and 157 to 214 (KKMK…TAED). 2 stretches are compositionally biased toward polar residues: residues 50-76 (QNLN…QASL) and 181-190 (LLSSSDQLAK). Residues 191–207 (STKHAAKNSPSKKKRKT) show a composition bias toward basic residues.

As to quaternary structure, interacts with cds1.

The protein resides in the nucleus. Functionally, involved in cell cycle arrest when DNA synthesis is inhibited by hydroxyurea, and in mitosis arrest after treatment with DNA-damaging agents. This protein is S phase-specific. This Schizosaccharomyces pombe (strain 972 / ATCC 24843) (Fission yeast) protein is DNA repair protein rad26 (rad26).